Here is a 349-residue protein sequence, read N- to C-terminus: Small ribosomal subunit biogenesis GTPase RsgA (349 aa).

Residues 1–11 are compositionally biased toward basic residues; sequence MSKKKLSKGQQ. The disordered stretch occupies residues 1-35; the sequence is MSKKKLSKGQQRRVSANHQRRLKHADSKVEWDDSQ. In terms of domain architecture, CP-type G spans 111 to 272; the sequence is YDGLKPIAAN…VIDSPGVREF (162 aa). Residues 158–161 and 212–220 each bind GTP; these read NKID and GQSGVGKSS. C296, C301, H303, and C309 together coordinate Zn(2+).

Belongs to the TRAFAC class YlqF/YawG GTPase family. RsgA subfamily. As to quaternary structure, monomer. Associates with 30S ribosomal subunit, binds 16S rRNA. The cofactor is Zn(2+).

The protein resides in the cytoplasm. One of several proteins that assist in the late maturation steps of the functional core of the 30S ribosomal subunit. Helps release RbfA from mature subunits. May play a role in the assembly of ribosomal proteins into the subunit. Circularly permuted GTPase that catalyzes slow GTP hydrolysis, GTPase activity is stimulated by the 30S ribosomal subunit. This Dickeya dadantii (strain 3937) (Erwinia chrysanthemi (strain 3937)) protein is Small ribosomal subunit biogenesis GTPase RsgA.